The primary structure comprises 149 residues: Epoxide hydrolase EphG (149 aa).

Residue Asp93 is the Proton donor of the active site. Asp122 serves as the catalytic Proton acceptor.

Belongs to the limonene-1,2-epoxide hydrolase family. In terms of assembly, homodimer. Is also present as monomer in solution.

It carries out the reaction an epoxide + H2O = an ethanediol. The enzyme catalyses 5,6alpha-epoxy-5alpha-cholestan-3beta-ol + H2O = 5alpha-cholestane-3beta,5,6beta-triol. The catalysed reaction is 5,6beta-epoxy-5beta-cholestan-3beta-ol + H2O = 5alpha-cholestane-3beta,5,6beta-triol. With respect to regulation, is inhibited by the anti-epileptic drug valpromide (Ki value of about 100 uM). In terms of biological role, epoxide hydrolase capable of hydrolyzing long or bulky lipophilic epoxides such as 9,10-epoxystearic acid and cholesterol 5,6-oxide in vitro. The physiological substrates have yet to be identified, but could be fatty acid or steroid derivatives. This Mycobacterium tuberculosis (strain ATCC 25618 / H37Rv) protein is Epoxide hydrolase EphG (ephG).